We begin with the raw amino-acid sequence, 251 residues long: tRNA pseudouridine synthase A (251 aa).

The Nucleophile role is filled by D54. Y111 is a binding site for substrate.

The protein belongs to the tRNA pseudouridine synthase TruA family. Homodimer.

The catalysed reaction is uridine(38/39/40) in tRNA = pseudouridine(38/39/40) in tRNA. Functionally, formation of pseudouridine at positions 38, 39 and 40 in the anticodon stem and loop of transfer RNAs. The chain is tRNA pseudouridine synthase A from Mycoplasma mycoides subsp. mycoides SC (strain CCUG 32753 / NCTC 10114 / PG1).